We begin with the raw amino-acid sequence, 89 residues long: Small ribosomal subunit protein uS17 (89 aa).

This sequence belongs to the universal ribosomal protein uS17 family. Part of the 30S ribosomal subunit.

One of the primary rRNA binding proteins, it binds specifically to the 5'-end of 16S ribosomal RNA. The protein is Small ribosomal subunit protein uS17 of Xanthomonas campestris pv. campestris (strain 8004).